We begin with the raw amino-acid sequence, 661 residues long: Ubiquitin-associated and SH3 domain-containing protein A (661 aa).

Positions 15-60 (KLKSRSSPSLLEPLLAMGFPVHTALKALAATGRKTAEEALAWLHDH) constitute a UBA domain. Positions 276-341 (VHYQTLRALF…PENYTDRASE (66 aa)) constitute an SH3 domain. The tract at residues 395-661 (RKSVLVVRHG…FNWRNWISGN (267 aa)) is phosphatase-like.

As to quaternary structure, homodimer or homooligomer. Interacts with CBL. Part of a complex containing CBL and activated EGFR. Interacts with ubiquitin and with mono-ubiquitinated proteins. Interacts with dynamin. In terms of tissue distribution, highest expression of UBASH3A in tissues belonging to the immune system, including spleen, peripheral blood leukocytes, thymus and bone marrow.

The protein resides in the cytoplasm. The protein localises to the nucleus. Its function is as follows. Interferes with CBL-mediated down-regulation and degradation of receptor-type tyrosine kinases. Promotes accumulation of activated target receptors, such as T-cell receptors, EGFR and PDGFRB, on the cell surface. Exhibits negligible protein tyrosine phosphatase activity at neutral pH. May act as a dominant-negative regulator of UBASH3B-dependent dephosphorylation. May inhibit dynamin-dependent endocytic pathways by functionally sequestering dynamin via its SH3 domain. The polypeptide is Ubiquitin-associated and SH3 domain-containing protein A (UBASH3A) (Homo sapiens (Human)).